The sequence spans 174 residues: MASNSTREKLIALAHKFCSIISSGDMEAVLALRTESCLTYQCCPSFSTRPLNNQETREYFEEWKHIGWNSKFWIIDEGTMVVDEAAKKIAFRAACSADTIGGPYENENLVILQATDDCALVDGIWEFFDAVRKQDLMNRLAAKQAAKGLDSWCANTHSGDDKGVPANNESKVAA.

This sequence belongs to the trt14 isomerase family. As to quaternary structure, homodimer.

It functions in the pathway secondary metabolite biosynthesis; terpenoid biosynthesis. Its function is as follows. Isomerase; part of the gene cluster that mediates the biosynthesis of paraherquonin, a meroterpenoid with a unique, highly congested hexacyclic molecular architecture. The first step of the pathway is the synthesis of 3,5-dimethylorsellinic acid (DMOA) by the polyketide synthase prhL. Synthesis of DMOA is followed by farnesylation by the prenyltransferase prhE, methylesterification by the methyl-transferase prhM, epoxidation of the prenyl chain by the flavin-dependent monooxygenase prhF, and cyclization of the farnesyl moiety by the terpene cyclase prhH, to yield the tetracyclic intermediate, protoaustinoid A. The short chain dehydrogenase prhI then oxidizes the C-3 alcohol group of the terpene cyclase product to transform protoaustinoid A into protoaustinoid B. The FAD-binding monooxygenase prhJ catalyzes the oxidation of protoaustinoid B into preaustinoid A which is further oxidized into preaustinoid A1 by FAD-binding monooxygenase phrK. Finally, prhA leads to berkeleydione via the berkeleyone B intermediate. PrhA is a multifunctional dioxygenase that first desaturates at C5-C6 to form berkeleyone B, followed by rearrangement of the A/B-ring to form the cycloheptadiene moiety in berkeleydione. Berkeleydione serves as the key intermediate for the biosynthesis of paraherquonin as well as many other meroterpenoids. The cytochrome P450 monooxygenases prhB, prhD, and prhN, as well as the isomerase prhC, are probably involved in the late stage of paraherquonin biosynthesis, after the production of berkeleydione. Especially prhC might be a multifunctional enzyme that catalyzes the D-ring expansion via intramolecular methoxy rearrangement, as well as the hydrolysis of the expanded D-ring. The chain is Isomerase prhC from Penicillium brasilianum.